The following is a 296-amino-acid chain: UDP-N-acetylenolpyruvoylglucosamine reductase (296 aa).

One can recognise an FAD-binding PCMH-type domain in the interval 19-203; sequence KVGGFAEYFS…LETTQKNLKK (185 aa). R166 is an active-site residue. The active-site Proton donor is the S217. E287 is an active-site residue.

It belongs to the MurB family. FAD is required as a cofactor.

Its subcellular location is the cytoplasm. It carries out the reaction UDP-N-acetyl-alpha-D-muramate + NADP(+) = UDP-N-acetyl-3-O-(1-carboxyvinyl)-alpha-D-glucosamine + NADPH + H(+). The protein operates within cell wall biogenesis; peptidoglycan biosynthesis. Cell wall formation. In Prochlorococcus marinus subsp. pastoris (strain CCMP1986 / NIES-2087 / MED4), this protein is UDP-N-acetylenolpyruvoylglucosamine reductase.